The following is a 626-amino-acid chain: ATP-dependent zinc metalloprotease FtsH (626 aa).

At 1-5 the chain is on the cytoplasmic side; the sequence is MNFRN. Residues 6–26 form a helical membrane-spanning segment; sequence LAIWLVIVAVLGGVFVVSQNS. Residues 27–98 lie on the Periplasmic side of the membrane; it reads RTKSSSEISY…DVKFKSGSIS (72 aa). The chain crosses the membrane as a helical span at residues 99–119; sequence FLAILVQLLPILLVVGVWLFL. At 120-626 the chain is on the cytoplasmic side; that stretch reads MRQMQGGAKG…SPGAGASVTA (507 aa). 191-198 lines the ATP pocket; it reads GPPGTGKT. Residue histidine 413 coordinates Zn(2+). Glutamate 414 is a catalytic residue. Histidine 417 and aspartate 491 together coordinate Zn(2+).

This sequence in the central section; belongs to the AAA ATPase family. It in the C-terminal section; belongs to the peptidase M41 family. Homohexamer. Zn(2+) is required as a cofactor.

It localises to the cell inner membrane. Acts as a processive, ATP-dependent zinc metallopeptidase for both cytoplasmic and membrane proteins. Plays a role in the quality control of integral membrane proteins. In terms of biological role, absence of FtsH leads to increased sigma-32 levels, which suggests, in analogy to E.coli, that sigma-32 is a substrate for FtsH. May play a role in the general stress response, as overexpression leads to improved resistance to salt stress. The chain is ATP-dependent zinc metalloprotease FtsH from Caulobacter vibrioides (strain NA1000 / CB15N) (Caulobacter crescentus).